We begin with the raw amino-acid sequence, 208 residues long: RNA chaperone ProQ (208 aa).

Residues 106–127 (SKAKVATRRKEQAKKAREEAKA) are compositionally biased toward basic and acidic residues. The segment at 106–154 (SKAKVATRRKEQAKKAREEAKAKKTARAATPPKRRPQPAAKKVEQPVET) is disordered.

It belongs to the ProQ family.

The protein resides in the cytoplasm. Its function is as follows. RNA chaperone with significant RNA binding, RNA strand exchange and RNA duplexing activities. The sequence is that of RNA chaperone ProQ from Aliivibrio fischeri (strain ATCC 700601 / ES114) (Vibrio fischeri).